The following is an 83-amino-acid chain: Small ribosomal subunit protein bS18 (83 aa).

A disordered region spans residues 1–23; the sequence is MKQRNNAKRVRLEQTRRPKKNPL.

It belongs to the bacterial ribosomal protein bS18 family. Part of the 30S ribosomal subunit. Forms a tight heterodimer with protein bS6.

Its function is as follows. Binds as a heterodimer with protein bS6 to the central domain of the 16S rRNA, where it helps stabilize the platform of the 30S subunit. The chain is Small ribosomal subunit protein bS18 from Corynebacterium efficiens (strain DSM 44549 / YS-314 / AJ 12310 / JCM 11189 / NBRC 100395).